The primary structure comprises 465 residues: Indoleacetamide hydrolase (465 aa).

The interval 1-40 (MVRGRHRSRDPQRRDLRGRDRRSASRTDARRQSAAERGCR) is disordered. Residues 9-39 (RDPQRRDLRGRDRRSASRTDARRQSAAERGC) show a composition bias toward basic and acidic residues. The Charge relay system role is filled by S149. S173 functions as the Acyl-ester intermediate in the catalytic mechanism.

Belongs to the amidase family.

The protein operates within plant hormone metabolism; auxin biosynthesis. In terms of biological role, hydrolyzes indole-3-acetamide (IAM) into indole-3-acetic acid (IAA). This chain is Indoleacetamide hydrolase (bam), found in Bradyrhizobium japonicum.